Reading from the N-terminus, the 717-residue chain is Transport/processing ATP-binding protein ComA (717 aa).

In terms of domain architecture, Peptidase C39 spans 11–138 (QVDQMDCGVA…EEWTGVTLFM (128 aa)). Cysteine 17 is an active-site residue. Transmembrane regions (helical) follow at residues 166 to 186 (GLIA…IVGS), 205 to 225 (LGII…LSYA), 237 to 257 (LSID…MSFF), 282 to 302 (TILS…VLFS), 306 to 326 (NLFF…FAFM), and 397 to 417 (VAHL…VMDG). The region spanning 168 to 450 (IANIVLATLL…IINLQTKLQT (283 aa)) is the ABC transmembrane type-1 domain. The ABC transporter domain occupies 484–717 (MTFKQVHYKY…GGFYAHLVNS (234 aa)). ATP is bound at residue 517–524 (GISGSGKT).

The protein belongs to the ABC transporter superfamily. Competence factor exporter (TC 3.A.1.112.1) family.

Its subcellular location is the cell membrane. Functionally, required for induction of competence. Seems to transport the competence-stimulating peptide (CSP). This is Transport/processing ATP-binding protein ComA (comA) from Streptococcus pneumoniae serotype 4 (strain ATCC BAA-334 / TIGR4).